The sequence spans 671 residues: Chitin biosynthesis protein CHS5 (671 aa).

The 91-residue stretch at 78 to 168 (KPESPVLKIV…EKVILRTHKM (91 aa)) folds into the Fibronectin type-III domain. Residues 166–262 (HKMTDMSGIT…RIVGVRGFYL (97 aa)) enclose the BRCT domain. The segment at 280–671 (EELSYSKENE…KKNKKKGKKK (392 aa)) is disordered. Phosphothreonine is present on Thr305. A compositionally biased stretch (polar residues) spans 311–321 (ASPNDNESNPS). Positions 322 to 332 (EAKEQGEKSGH) are enriched in basic and acidic residues. 5 positions are modified to phosphoserine: Ser338, Ser362, Ser365, Ser383, and Ser384. The segment covering 349–365 (ALENETTIETVNPSVRS) has biased composition (polar residues). Residues 409–419 (KSEDTDTHSNE) are compositionally biased toward basic and acidic residues. Residues 434–443 (NNITTESAGE) show a composition bias toward polar residues. The span at 461 to 486 (EIETPEVNESIEDANEPAEDSNEPVE) shows a compositional bias: acidic residues. Residues 487–521 (DSNKPVKDSNKPVEDSNKPVEDSNKPVEDSNKPVE) show a composition bias toward basic and acidic residues. Residues 522–538 (DANEPVEDTSEPVEDAG) are compositionally biased toward acidic residues. A compositionally biased stretch (polar residues) spans 542–551 (QETNEFTTDI). Residues Ser573 and Ser579 each carry the phosphoserine modification. Residues 581-591 (EDVKPEEKGSE) show a composition bias toward basic and acidic residues. Lys584 participates in a covalent cross-link: Glycyl lysine isopeptide (Lys-Gly) (interchain with G-Cter in ubiquitin). Ser590 carries the post-translational modification Phosphoserine. The segment covering 606-620 (GESTTHQKTEASASL) has biased composition (polar residues). A compositionally biased stretch (acidic residues) spans 627-638 (EEQETTEAEVNT). A compositionally biased stretch (basic residues) spans 657–671 (NKKKNKKNKKKGKKK).

It belongs to the CHS5 family. In terms of assembly, component of the CHS5/6 complex composed of the 4 CHAPS proteins BCH1, BCH2, BUD7, and CHS6 as well as at least CHS5 and GTP-bound ARF1. The complex interacts with the cargo protein CHS3.

Its subcellular location is the golgi apparatus. The protein localises to the trans-Golgi network membrane. Component of the CHS5/6 complex which mediates export of specific cargo proteins, including chitin synthase CHS3. Also involved in targeting FUS1 to sites of polarized growth. The chain is Chitin biosynthesis protein CHS5 (CHS5) from Saccharomyces cerevisiae (strain ATCC 204508 / S288c) (Baker's yeast).